Reading from the N-terminus, the 111-residue chain is Large ribosomal subunit protein eL30 (111 aa).

It belongs to the eukaryotic ribosomal protein eL30 family.

The chain is Large ribosomal subunit protein eL30 (RPL30) from Oryza sativa subsp. japonica (Rice).